Consider the following 69-residue polypeptide: DNA-directed RNA polymerase subunit epsilon (69 aa).

This sequence belongs to the RNA polymerase subunit epsilon family. RNAP is composed of a core of 2 alpha, a beta and a beta' subunit. The core is associated with a delta subunit, and at least one of epsilon or omega. When a sigma factor is associated with the core the holoenzyme is formed, which can initiate transcription.

The enzyme catalyses RNA(n) + a ribonucleoside 5'-triphosphate = RNA(n+1) + diphosphate. Functionally, a non-essential component of RNA polymerase (RNAP). In Listeria monocytogenes serotype 4b (strain CLIP80459), this protein is DNA-directed RNA polymerase subunit epsilon.